The following is a 376-amino-acid chain: Transmembrane protein 43 homolog (376 aa).

Residues 1 to 10 are Cytoplasmic-facing; that stretch reads MASLSETLRS. The helical transmembrane segment at 11–31 threads the bilayer; sequence HWPIALFGVILFVAGGTELYW. The Lumenal portion of the chain corresponds to 32–277; it reads NEGRAVHNMM…EVFRLEARAQ (246 aa). A helical transmembrane segment spans residues 278–298; it reads VLHTWWWRFVGWLLIFFGVTC. Residues 299 to 323 are Cytoplasmic-facing; the sequence is NTKILRLLFVRVPLLVALAPDPQFP. A run of 2 helical transmembrane segments spans residues 324-344 and 345-365; these read VTGNLLIAFSLALTIAAVAWI and LHRPVIGACLLLAGASPYVWF. Topologically, residues 366–376 are cytoplasmic; that stretch reads TRNLVDYHRLD.

It belongs to the TMEM43 family.

Its subcellular location is the endoplasmic reticulum membrane. It localises to the nucleus envelope. In terms of biological role, involved in lipid metabolism and utilization. This is Transmembrane protein 43 homolog from Drosophila melanogaster (Fruit fly).